The following is a 350-amino-acid chain: tRNA uridine(34) hydroxylase (350 aa).

Residues 146-240 form the Rhodanese domain; sequence DDPDAVFIDM…YARRARAQGL (95 aa). Catalysis depends on Cys-200, which acts as the Cysteine persulfide intermediate. Positions 319-328 are enriched in basic and acidic residues; sequence RRRRAGRENG. The disordered stretch occupies residues 319 to 350; the sequence is RRRRAGRENGNKIFNKSRGRLNSKLSIPDPAE.

It belongs to the TrhO family.

It carries out the reaction uridine(34) in tRNA + AH2 + O2 = 5-hydroxyuridine(34) in tRNA + A + H2O. Its function is as follows. Catalyzes oxygen-dependent 5-hydroxyuridine (ho5U) modification at position 34 in tRNAs. This Salmonella typhimurium (strain LT2 / SGSC1412 / ATCC 700720) protein is tRNA uridine(34) hydroxylase.